A 358-amino-acid polypeptide reads, in one-letter code: UDP-N-acetylglucosamine--N-acetylmuramyl-(pentapeptide) pyrophosphoryl-undecaprenol N-acetylglucosamine transferase (358 aa).

UDP-N-acetyl-alpha-D-glucosamine contacts are provided by residues threonine 11–glycine 13, asparagine 120, arginine 161, serine 188, and glutamine 282.

This sequence belongs to the glycosyltransferase 28 family. MurG subfamily.

It localises to the cell inner membrane. It carries out the reaction di-trans,octa-cis-undecaprenyl diphospho-N-acetyl-alpha-D-muramoyl-L-alanyl-D-glutamyl-meso-2,6-diaminopimeloyl-D-alanyl-D-alanine + UDP-N-acetyl-alpha-D-glucosamine = di-trans,octa-cis-undecaprenyl diphospho-[N-acetyl-alpha-D-glucosaminyl-(1-&gt;4)]-N-acetyl-alpha-D-muramoyl-L-alanyl-D-glutamyl-meso-2,6-diaminopimeloyl-D-alanyl-D-alanine + UDP + H(+). The protein operates within cell wall biogenesis; peptidoglycan biosynthesis. In terms of biological role, cell wall formation. Catalyzes the transfer of a GlcNAc subunit on undecaprenyl-pyrophosphoryl-MurNAc-pentapeptide (lipid intermediate I) to form undecaprenyl-pyrophosphoryl-MurNAc-(pentapeptide)GlcNAc (lipid intermediate II). This is UDP-N-acetylglucosamine--N-acetylmuramyl-(pentapeptide) pyrophosphoryl-undecaprenol N-acetylglucosamine transferase from Synechococcus sp. (strain CC9605).